Reading from the N-terminus, the 1536-residue chain is Ferredoxin-dependent glutamate synthase (1536 aa).

The For GATase activity role is filled by Cys27. One can recognise a Glutamine amidotransferase type-2 domain in the interval 27-427 (CGVGFIANLN…PGQMLCVDLS (401 aa)). An FMN-binding site is contributed by 1105–1162 (LAEVHTTLVENSLREKVILRVDGGLRTGKDIIIAALMGAEEFGFGTVAMIATGCVMAR). Cys1158, Cys1164, and Cys1169 together coordinate [3Fe-4S] cluster.

Belongs to the glutamate synthase family. In terms of assembly, monomer. [3Fe-4S] cluster serves as cofactor. Requires FAD as cofactor. It depends on FMN as a cofactor.

The protein resides in the plastid. The protein localises to the chloroplast stroma. The catalysed reaction is 2 oxidized [2Fe-2S]-[ferredoxin] + 2 L-glutamate = L-glutamine + 2 reduced [2Fe-2S]-[ferredoxin] + 2-oxoglutarate + 2 H(+). Its pathway is amino-acid biosynthesis; L-glutamate biosynthesis via GLT pathway; L-glutamate from 2-oxoglutarate and L-glutamine (ferredoxin route): step 1/1. The protein operates within energy metabolism; nitrogen metabolism. In Antithamnion sp. (Red alga), this protein is Ferredoxin-dependent glutamate synthase (gltB).